The chain runs to 265 residues: MKNQKIIAIYGKGGIGKSSTASNVAAACAEAGKKVMIIGCDPKSDSSITLLRGRRIPTILDLLREGVDIKKEDVVFEGYAGVKCVEAGGPEPGIGCAGRGIIVAIQKLKSISGNLLKEQDLIIYDVPGDIVCGGFVAPVRKGFVNEAYVLTSGEYMPLYAANNICKGLSKIGMPLSGVICNSRNVSREEEIVSKFSEEIGSQLMAFIPKRQVVQDCEREGYSVMEKAPESDIAEIYRKLGKAILENEKRVTADSLSDERLRELTK.

Belongs to the NifH/BchL/ChlL family. Homodimer. The Ni-sirohydrochlorin a,c-diamide reductive cyclase complex is composed of a NifH homolog component CfbC and a NifD homolog component CfbD. [4Fe-4S] cluster is required as a cofactor.

It carries out the reaction Ni-sirohydrochlorin a,c-diamide + 3 AH2 + ATP + H2O = 15,17(3)-seco-F430-17(3)-acid + 3 A + ADP + phosphate. Involved in the biosynthesis of the unique nickel-containing tetrapyrrole coenzyme F430, the prosthetic group of methyl-coenzyme M reductase (MCR), which plays a key role in methanogenesis and anaerobic methane oxidation. Catalyzes both the six-electron reduction of the tetrahydroporphyrin ring system and the gamma-lactamization of the c-acetamide side chain of Ni-sirohydrochlorin a,c-diamide to yield 15,17(3)-seco-F430-17(3)-acid (seco-F430), the last intermediate in the biosynthesis of the coenzyme F430. In Methanosarcina barkeri (strain Fusaro / DSM 804), this protein is Ni-sirohydrochlorin a,c-diamide reductive cyclase complex, component CfbC.